Consider the following 153-residue polypeptide: Probable Brix domain-containing ribosomal biogenesis protein (153 aa).

Residues 1–153 form the Brix domain; that stretch reads MQVLTTSRKP…RILKISRSSR (153 aa).

Functionally, probably involved in the biogenesis of the ribosome. In Archaeoglobus fulgidus (strain ATCC 49558 / DSM 4304 / JCM 9628 / NBRC 100126 / VC-16), this protein is Probable Brix domain-containing ribosomal biogenesis protein.